We begin with the raw amino-acid sequence, 354 residues long: Holliday junction branch migration complex subunit RuvB (354 aa).

The tract at residues 1–183 (MTGDNLVSAY…FGFVAHLDFY (183 aa)) is large ATPase domain (RuvB-L). Residues R23, G64, K67, T68, S69, 130 to 132 (EDF), R173, Y183, and R220 contribute to the ATP site. Position 68 (T68) interacts with Mg(2+). A small ATPAse domain (RuvB-S) region spans residues 184–254 (SPADLETLLN…TAQAALTVYD (71 aa)). Residues 257–354 (ALGLDRLDRA…DLFSVEPDQP (98 aa)) form a head domain (RuvB-H) region. The DNA site is built by R312 and R317.

The protein belongs to the RuvB family. In terms of assembly, homohexamer. Forms an RuvA(8)-RuvB(12)-Holliday junction (HJ) complex. HJ DNA is sandwiched between 2 RuvA tetramers; dsDNA enters through RuvA and exits via RuvB. An RuvB hexamer assembles on each DNA strand where it exits the tetramer. Each RuvB hexamer is contacted by two RuvA subunits (via domain III) on 2 adjacent RuvB subunits; this complex drives branch migration. In the full resolvosome a probable DNA-RuvA(4)-RuvB(12)-RuvC(2) complex forms which resolves the HJ.

Its subcellular location is the cytoplasm. It carries out the reaction ATP + H2O = ADP + phosphate + H(+). In terms of biological role, the RuvA-RuvB-RuvC complex processes Holliday junction (HJ) DNA during genetic recombination and DNA repair, while the RuvA-RuvB complex plays an important role in the rescue of blocked DNA replication forks via replication fork reversal (RFR). RuvA specifically binds to HJ cruciform DNA, conferring on it an open structure. The RuvB hexamer acts as an ATP-dependent pump, pulling dsDNA into and through the RuvAB complex. RuvB forms 2 homohexamers on either side of HJ DNA bound by 1 or 2 RuvA tetramers; 4 subunits per hexamer contact DNA at a time. Coordinated motions by a converter formed by DNA-disengaged RuvB subunits stimulates ATP hydrolysis and nucleotide exchange. Immobilization of the converter enables RuvB to convert the ATP-contained energy into a lever motion, pulling 2 nucleotides of DNA out of the RuvA tetramer per ATP hydrolyzed, thus driving DNA branch migration. The RuvB motors rotate together with the DNA substrate, which together with the progressing nucleotide cycle form the mechanistic basis for DNA recombination by continuous HJ branch migration. Branch migration allows RuvC to scan DNA until it finds its consensus sequence, where it cleaves and resolves cruciform DNA. The sequence is that of Holliday junction branch migration complex subunit RuvB from Salinispora tropica (strain ATCC BAA-916 / DSM 44818 / JCM 13857 / NBRC 105044 / CNB-440).